The chain runs to 386 residues: AT-hook motif nuclear-localized protein 8 (386 aa).

Disordered regions lie at residues 1-175 (MDSR…LGGT) and 303-372 (KQSS…LHPH). Low complexity predominate over residues 54–70 (QQQSQTFHQQQQQQMDQ). Residues 101–110 (VKKKRGRPRK) are compositionally biased toward basic residues. Residues 102–110 (KKKRGRPRK) carry the Bipartite nuclear localization signal motif. Positions 102-114 (KKKRGRPRKYTPD) form a DNA-binding region, a.T hook 1. Over residues 126 to 135 (PLLSAASNSY) the composition is skewed to polar residues. Over residues 136 to 147 (GEGGVGDSGGNG) the composition is skewed to gly residues. Positions 155–167 (KRNRGRPPGSSKK) form a DNA-binding region, a.T hook 2. The 143-residue stretch at 174-316 (GTSGVGFTPH…VNIARGQNPE (143 aa)) folds into the PPC domain. Composition is skewed to low complexity over residues 328 to 337 (GSVSQGPSSE) and 361 to 372 (QQQQQQQPLHPH).

It localises to the nucleus. Functionally, transcription factor that specifically binds AT-rich DNA sequences related to the nuclear matrix attachment regions (MARs). This chain is AT-hook motif nuclear-localized protein 8, found in Arabidopsis thaliana (Mouse-ear cress).